Reading from the N-terminus, the 348-residue chain is Acetylesterase (348 aa).

The first 16 residues, 1-16 (MRSILVIPSFVAVLNA), serve as a signal peptide directing secretion. Residues Asn-64, Asn-165, Asn-218, Asn-223, and Asn-297 are each glycosylated (N-linked (GlcNAc...) asparagine).

The protein belongs to the carbohydrate esterase CE16 family. N-glycosylated.

It localises to the secreted. It catalyses the reaction an acetyl ester + H2O = an aliphatic alcohol + acetate + H(+). In terms of biological role, acetylesterase that acts as an exo-deacetylase. Shows activity towards naphtyl acetate, triacetin, as well as towards glucose- and xylose acetates. Liberates acetic acid from xylo-oligomers. This chain is Acetylesterase, found in Hypocrea jecorina (Trichoderma reesei).